The primary structure comprises 201 residues: Probable GTP-binding protein EngB (201 aa).

The region spanning 21–191 is the EngB-type G domain; it reads AAPQIILAGR…WNLLDVTAIP (171 aa). GTP contacts are provided by residues 29–36, 56–60, 75–78, 142–145, and 168–172; these read GRSNVGKS, GKTRS, DLPG, TKSD, and ICVSS. The Mg(2+) site is built by Ser-36 and Thr-58.

This sequence belongs to the TRAFAC class TrmE-Era-EngA-EngB-Septin-like GTPase superfamily. EngB GTPase family. The cofactor is Mg(2+).

In terms of biological role, necessary for normal cell division and for the maintenance of normal septation. The polypeptide is Probable GTP-binding protein EngB (Maridesulfovibrio salexigens (strain ATCC 14822 / DSM 2638 / NCIMB 8403 / VKM B-1763) (Desulfovibrio salexigens)).